The following is an 824-amino-acid chain: MSPVPCLSTCCCFRKIVEYSTMSWFRKSANDSLLETNHDRIPVAPPREVRAPSPRLPPSYQTSNEKMFRVRKAPSEEHTLANYAYVNRSDFDDKQIKHVRVNPGPAHHYIFSIRNDGSIKPGEIAFGVPHRKWAALSLDQEVRVTPFTFQQSEYVGSMILTADFNAKKNVTSEPLNADLMAREFSIQFGGQAFSKGMQMAFRFEDKEKNKTHTLSLVVKSIEGFDIGKAAAAASGASNTDSSATKPKQIEAGELLPNSVIVFDKEEGSMLNLIGKSKGKSAYRSIINPDWDFQQMGIGGLDTEFSHIFRRAFASRVFPPEFIEQLGMKHVRGILLFGPPGTGKTLMARQIGKMLNAREPKIVNGPQILDKYVGESESNVRKLFADAEEEWRRCGANSGLHIIIFDEIDAICKQRGSMAGSSSVHDTVVNQLLSKMDGVEQLNNILVIGMTNRRDMIDEALLRPGRLEVQMEVSLPDETGRLQILKIHTARMREYNKMDPNVDLEDISKRTKNFSGAELEGLVRAAQSSAMNRLVKAGGKAQADPDAIEKLAINSGDFDYALENDIKPAFGRSDESLNRFLSRGMIVWGPEVTKILDEGSLLAATVKNPENSGFRTVVLAGAAKTGKTSLAAQMAKSSDFPFVKVISPEDTVGFSESAKCMALKKAFEDAKRSKLSVLLIDNLERLIDYHPVGPRYSNLVIQALLVLLNAPPPAGHRLFVIATSSDRMFLRDMGLMDVFGDVIDIPKLTTAGQMMNVIQESNIYSDDQLPMIEQKLASICRGEGFHGVGIKHLLELIESARQCEADYRVPTLLNMMEGLALNLYR.

Residues 582–587 and 622–629 contribute to the ATP site; these read RGMIVW and AKTGKTSL. Threonine 627 serves as a coordination point for Mg(2+).

This sequence belongs to the AAA ATPase family. As to quaternary structure, homohexamer. Mg(2+) serves as cofactor.

The protein resides in the cytoplasm. The catalysed reaction is ATP + H2O = ADP + phosphate + H(+). Required for vesicle-mediated transport. Catalyzes the fusion of transport vesicles within the Golgi cisternae. Is also required for transport from the endoplasmic reticulum to the Golgi stack. Seems to function as a fusion protein required for the delivery of cargo proteins to all compartments of the Golgi stack independent of vesicle origin. The sequence is that of Vesicle-fusing ATPase (nsf-1) from Caenorhabditis elegans.